Here is a 381-residue protein sequence, read N- to C-terminus: Putative F-box protein At3g17500 (381 aa).

The 45-residue stretch at methionine 1–histidine 45 folds into the F-box domain.

The protein is Putative F-box protein At3g17500 of Arabidopsis thaliana (Mouse-ear cress).